The sequence spans 101 residues: Putative monooxygenase Rv0793 (101 aa).

The ABM domain occupies 5–93 (VAVIARFMPR…LTRPVAVTVL (89 aa)).

In terms of assembly, homodimer.

In terms of biological role, putative monooygenase that might be involved in antibiotic biosynthesis, or may act as reactive oxygen species scavenger that could help in evading host defenses. The sequence is that of Putative monooxygenase Rv0793 from Mycobacterium tuberculosis (strain ATCC 25618 / H37Rv).